A 767-amino-acid chain; its full sequence is Cilia- and flagella-associated protein 91 (767 aa).

The tract at residues 1 to 29 is disordered; sequence MSHAVTIQEPQAQPQVSQTRYRERSRAGS. Polar residues predominate over residues 8 to 19; it reads QEPQAQPQVSQT.

This sequence belongs to the CFAP91 family. Part of a complex containing MYCBP, AKAP1 and PRKAR2B. Interacts with MYCBP and AKAP1. Interacts with CFAP61. Post-translationally, phosphorylated by PKA.

It is found in the cytoplasm. It localises to the mitochondrion. Its subcellular location is the cytoskeleton. The protein localises to the cilium axoneme. Involved in sperm flagellum axonemal organization and function. May regulate cilium motility through its role in the assembly of the axonemal radial spokes. The protein is Cilia- and flagella-associated protein 91 (CFAP91) of Macaca fascicularis (Crab-eating macaque).